We begin with the raw amino-acid sequence, 260 residues long: Proteasome subunit alpha (260 aa).

Positions 241-260 are disordered; that stretch reads VEEEEVKEKEEDYSELDSHY.

It belongs to the peptidase T1A family. The 20S proteasome core is composed of 14 alpha and 14 beta subunits that assemble into four stacked heptameric rings, resulting in a barrel-shaped structure. The two inner rings, each composed of seven catalytic beta subunits, are sandwiched by two outer rings, each composed of seven alpha subunits. The catalytic chamber with the active sites is on the inside of the barrel. Has a gated structure, the ends of the cylinder being occluded by the N-termini of the alpha-subunits. Is capped at one or both ends by the proteasome regulatory ATPase, PAN.

The protein localises to the cytoplasm. Its activity is regulated as follows. The formation of the proteasomal ATPase PAN-20S proteasome complex, via the docking of the C-termini of PAN into the intersubunit pockets in the alpha-rings, triggers opening of the gate for substrate entry. Interconversion between the open-gate and close-gate conformations leads to a dynamic regulation of the 20S proteasome proteolysis activity. In terms of biological role, component of the proteasome core, a large protease complex with broad specificity involved in protein degradation. The polypeptide is Proteasome subunit alpha (Pyrococcus horikoshii (strain ATCC 700860 / DSM 12428 / JCM 9974 / NBRC 100139 / OT-3)).